Reading from the N-terminus, the 245-residue chain is Orotidine 5'-phosphate decarboxylase (245 aa).

Substrate is bound by residues Asp-22, Lys-44, 71 to 80 (DLKFHDIPNT), Thr-131, Arg-192, Gln-201, Gly-221, and Arg-222. The active-site Proton donor is Lys-73.

The protein belongs to the OMP decarboxylase family. Type 1 subfamily. As to quaternary structure, homodimer.

The enzyme catalyses orotidine 5'-phosphate + H(+) = UMP + CO2. It participates in pyrimidine metabolism; UMP biosynthesis via de novo pathway; UMP from orotate: step 2/2. In terms of biological role, catalyzes the decarboxylation of orotidine 5'-monophosphate (OMP) to uridine 5'-monophosphate (UMP). This Salmonella choleraesuis (strain SC-B67) protein is Orotidine 5'-phosphate decarboxylase.